A 98-amino-acid chain; its full sequence is NADH-ubiquinone oxidoreductase chain 4L (98 aa).

Helical transmembrane passes span 1-21 (MPYIYMNITLAFVISLIGTLM), 29-49 (SLLCLEGMMLSLFTLNALLSL), and 61-81 (LILLVFAACEAAVGLALLVMI).

The protein belongs to the complex I subunit 4L family. As to quaternary structure, core subunit of respiratory chain NADH dehydrogenase (Complex I) which is composed of 45 different subunits.

Its subcellular location is the mitochondrion inner membrane. The enzyme catalyses a ubiquinone + NADH + 5 H(+)(in) = a ubiquinol + NAD(+) + 4 H(+)(out). Its function is as follows. Core subunit of the mitochondrial membrane respiratory chain NADH dehydrogenase (Complex I) which catalyzes electron transfer from NADH through the respiratory chain, using ubiquinone as an electron acceptor. Part of the enzyme membrane arm which is embedded in the lipid bilayer and involved in proton translocation. This is NADH-ubiquinone oxidoreductase chain 4L (MT-ND4L) from Loxodonta africana (African elephant).